The following is a 198-amino-acid chain: Dephospho-CoA kinase (198 aa).

Residues 3–198 (IVGITGGIGS…LLAKERLELA (196 aa)) form the DPCK domain. Residue 11–16 (GSGKTT) coordinates ATP.

The protein belongs to the CoaE family.

It is found in the cytoplasm. The enzyme catalyses 3'-dephospho-CoA + ATP = ADP + CoA + H(+). It participates in cofactor biosynthesis; coenzyme A biosynthesis; CoA from (R)-pantothenate: step 5/5. Its function is as follows. Catalyzes the phosphorylation of the 3'-hydroxyl group of dephosphocoenzyme A to form coenzyme A. This chain is Dephospho-CoA kinase, found in Dehalococcoides mccartyi (strain ATCC BAA-2266 / KCTC 15142 / 195) (Dehalococcoides ethenogenes (strain 195)).